Reading from the N-terminus, the 556-residue chain is Small ribosomal subunit protein bS1 (556 aa).

6 consecutive S1 motif domains span residues 35–105 (TIKE…ISQQ), 120–183 (NAII…ISRK), 204–272 (TEPV…LSIK), 289–359 (GYAI…VSLK), 377–444 (DVLE…LSAK), and 461–525 (DSVI…ASVH).

This sequence belongs to the bacterial ribosomal protein bS1 family.

Its function is as follows. Binds mRNA; thus facilitating recognition of the initiation point. It is needed to translate mRNA with a short Shine-Dalgarno (SD) purine-rich sequence. This Helicobacter pylori (strain ATCC 700392 / 26695) (Campylobacter pylori) protein is Small ribosomal subunit protein bS1 (rpsA).